Consider the following 426-residue polypeptide: UPF0164 protein TP_0548 (426 aa).

Positions 1-37 are cleaved as a signal peptide; the sequence is MISCSVRRRPRWEPQVGAAFLAFALLPVLASGRGMQA.

It belongs to the UPF0164 family.

This chain is UPF0164 protein TP_0548, found in Treponema pallidum (strain Nichols).